Consider the following 1270-residue polypeptide: Myosin-1 (1270 aa).

Positions Met1 to Ala40 are disordered. Residues Ile50–Asp729 form the Myosin motor domain. Gly143–Thr150 contacts ATP. Ser371 carries the phosphoserine modification. Residues Ser418 to Ala500 are actin-binding. 2 consecutive IQ domains span residues His733–Cys753 and Ala754–Gln779. The TH1 domain maps to Arg787 to Pro980. Disordered stretches follow at residues Gly960–Asp1102 and Pro1144–Trp1270. Residues Asn963–Thr974 show a composition bias toward polar residues. Over residues Ala1023–Gln1058 the composition is skewed to pro residues. Residues Pro1059–Arg1078 show a composition bias toward low complexity. Positions Ala1079–Pro1088 are enriched in pro residues. The SH3 domain maps to Gln1092 to Ala1153. Pro residues predominate over residues Lys1157 to Ala1167. 2 stretches are compositionally biased toward low complexity: residues Pro1168–Lys1186 and Asn1238–Ala1252.

The protein belongs to the TRAFAC class myosin-kinesin ATPase superfamily. Myosin family. Phosphorylation of the TEDS site (Ser-371) is required for the polarization of the actin cytoskeleton. Phosphorylation probably activates the myosin-I ATPase activity.

It localises to the cytoplasm. The protein resides in the cytoskeleton. The protein localises to the actin patch. Functionally, type-I myosin implicated in the organization of the actin cytoskeleton. Required for proper actin cytoskeleton polarization. At the cell cortex, assembles in patch-like structures together with proteins from the actin-polymerizing machinery and promotes actin assembly. Functions as actin nucleation-promoting factor (NPF) for the Arp2/3 complex. Plays an important role in polarized growth, spore germination, hyphal morphogenesis, and septal wall formation. This Aspergillus niger (strain ATCC MYA-4892 / CBS 513.88 / FGSC A1513) protein is Myosin-1 (myoA).